Consider the following 101-residue polypeptide: NADH-quinone oxidoreductase subunit K (101 aa).

3 consecutive transmembrane segments (helical) span residues 4–24, 30–50, and 65–85; these read LSHY…GIFI, IVIL…LVAF, and FVLT…VVFF.

This sequence belongs to the complex I subunit 4L family. As to quaternary structure, NDH-1 is composed of 14 different subunits. Subunits NuoA, H, J, K, L, M, N constitute the membrane sector of the complex.

Its subcellular location is the cell inner membrane. The enzyme catalyses a quinone + NADH + 5 H(+)(in) = a quinol + NAD(+) + 4 H(+)(out). NDH-1 shuttles electrons from NADH, via FMN and iron-sulfur (Fe-S) centers, to quinones in the respiratory chain. The immediate electron acceptor for the enzyme in this species is believed to be ubiquinone. Couples the redox reaction to proton translocation (for every two electrons transferred, four hydrogen ions are translocated across the cytoplasmic membrane), and thus conserves the redox energy in a proton gradient. In Methylobacterium sp. (strain 4-46), this protein is NADH-quinone oxidoreductase subunit K.